Consider the following 508-residue polypeptide: Steroid 17-alpha-hydroxylase/17,20 lyase (508 aa).

Asparagine 202 lines the substrate pocket. Position 442 (cysteine 442) interacts with heme.

The protein belongs to the cytochrome P450 family. It depends on heme as a cofactor.

The protein resides in the endoplasmic reticulum membrane. It localises to the microsome membrane. The enzyme catalyses a C21-steroid + reduced [NADPH--hemoprotein reductase] + O2 = a 17alpha-hydroxy-C21-steroid + oxidized [NADPH--hemoprotein reductase] + H2O + H(+). It catalyses the reaction progesterone + reduced [NADPH--hemoprotein reductase] + O2 = 17alpha-hydroxyprogesterone + oxidized [NADPH--hemoprotein reductase] + H2O + H(+). The catalysed reaction is pregnenolone + reduced [NADPH--hemoprotein reductase] + O2 = 17alpha-hydroxypregnenolone + oxidized [NADPH--hemoprotein reductase] + H2O + H(+). It carries out the reaction 17alpha-hydroxypregnenolone + reduced [NADPH--hemoprotein reductase] + O2 = 3beta-hydroxyandrost-5-en-17-one + acetate + oxidized [NADPH--hemoprotein reductase] + H2O + 2 H(+). It participates in steroid hormone biosynthesis. The protein operates within steroid biosynthesis; glucocorticoid biosynthesis. Its activity is regulated as follows. Regulated predominantly by intracellular cAMP levels. The 17,20-lyase activity is stimulated by cytochrome b5, which acts as an allosteric effector increasing the Vmax of the lyase activity. In terms of biological role, a cytochrome P450 monooxygenase involved in corticoid and androgen biosynthesis. Catalyzes 17-alpha hydroxylation of C21 steroids, which is common for both pathways. A second oxidative step, required only for androgen synthesis, involves an acyl-carbon cleavage. Hydroxylates pregnenolone to form 17-alpha pregnenolone, followed by the cleavage of the C17-C20 bond to form dehydroepiandrosterone (DHEA). Has 17-alpha hydroxylase activity toward progesterone. The 17-alpha hydroxy intermediates, as part of adrenal glucocorticoids biosynthesis pathway, are precursors of cortisol. Mechanistically, uses molecular oxygen inserting one oxygen atom into a substrate, and reducing the second into a water molecule, with two electrons provided by NADPH via cytochrome P450 reductase (CPR; NADPH-ferrihemoprotein reductase). This is Steroid 17-alpha-hydroxylase/17,20 lyase (CYP17A1) from Papio hamadryas ursinus (Chacma baboon).